The primary structure comprises 128 residues: uncharacterized protein (128 aa).

Disordered regions lie at residues 62 to 83 and 101 to 128; these read LNPSSHPPSPDFPTGSSASPRV and FAASSSSTAPVTVTDKPVTPAVSKRYQP. Residues 101 to 114 are compositionally biased toward low complexity; sequence FAASSSSTAPVTVT.

It localises to the cytoplasm. The protein resides in the nucleus. This is an uncharacterized protein from Saccharomyces cerevisiae (strain ATCC 204508 / S288c) (Baker's yeast).